Consider the following 763-residue polypeptide: 1,4-alpha-glucan branching enzyme GlgB (763 aa).

The active-site Nucleophile is the Asp437. The Proton donor role is filled by Glu488.

It belongs to the glycosyl hydrolase 13 family. GlgB subfamily. In terms of assembly, monomer.

The enzyme catalyses Transfers a segment of a (1-&gt;4)-alpha-D-glucan chain to a primary hydroxy group in a similar glucan chain.. It participates in glycan biosynthesis; glycogen biosynthesis. Catalyzes the formation of the alpha-1,6-glucosidic linkages in glycogen by scission of a 1,4-alpha-linked oligosaccharide from growing alpha-1,4-glucan chains and the subsequent attachment of the oligosaccharide to the alpha-1,6 position. This chain is 1,4-alpha-glucan branching enzyme GlgB, found in Synechococcus sp. (strain JA-2-3B'a(2-13)) (Cyanobacteria bacterium Yellowstone B-Prime).